The sequence spans 901 residues: Protein translocase subunit SecA (901 aa).

Residues Q89, 107 to 111 (GEGKT), and D502 contribute to the ATP site. Positions 838-883 (YQQQQAETEAQMHPEHEEAEGGEVSGRVAGFDETDPTTWGNPSRND) are disordered. Residues C885, C887, C896, and H897 each contribute to the Zn(2+) site.

Belongs to the SecA family. In terms of assembly, monomer and homodimer. Part of the essential Sec protein translocation apparatus which comprises SecA, SecYEG and auxiliary proteins SecDF-YajC and YidC. The cofactor is Zn(2+).

Its subcellular location is the cell inner membrane. The protein localises to the cytoplasm. The catalysed reaction is ATP + H2O + cellular proteinSide 1 = ADP + phosphate + cellular proteinSide 2.. Part of the Sec protein translocase complex. Interacts with the SecYEG preprotein conducting channel. Has a central role in coupling the hydrolysis of ATP to the transfer of proteins into and across the cell membrane, serving both as a receptor for the preprotein-SecB complex and as an ATP-driven molecular motor driving the stepwise translocation of polypeptide chains across the membrane. The polypeptide is Protein translocase subunit SecA (Paracoccus denitrificans (strain Pd 1222)).